Consider the following 266-residue polypeptide: Putative carbamate hydrolase RutD (266 aa).

The protein belongs to the AB hydrolase superfamily. Hydrolase RutD family.

It catalyses the reaction carbamate + 2 H(+) = NH4(+) + CO2. Functionally, involved in pyrimidine catabolism. May facilitate the hydrolysis of carbamate, a reaction that can also occur spontaneously. This Escherichia coli (strain B / BL21-DE3) protein is Putative carbamate hydrolase RutD.